The chain runs to 252 residues: MAVGKNKRLSKGKKGIKKRVVDPFSRKEWYDIKAPAFFEVKNVGKTLVNRTAGLKNANDSLKGRILEVSLADLQKDEEHAFRKVKLRVEDIQGKSCLTSFNGLSITSDKLRSLVRKWQTTIEADQTIKTTDGYLCRVFVIGFTRRRANQVKKTTYAQSSQIRAIRQKMFQVIQNQTSSCSMRELVQKLIPEVIGREIERATGSIFPLQNVLVRKVKILKAPKHDAQKLLELHGESQDVGTKVVKDVAPLESV.

N-acetylalanine; partial is present on A2. Position 251 is a phosphoserine (S251).

It belongs to the eukaryotic ribosomal protein eS1 family. As to quaternary structure, component of the small ribosomal subunit (SSU). Mature yeast ribosomes consist of a small (40S) and a large (60S) subunit. The 40S small subunit contains 1 molecule of ribosomal RNA (18S rRNA) and at least 33 different proteins. The large 60S subunit contains 3 rRNA molecules (25S, 5.8S and 5S rRNA) and at least 46 different proteins. eS1 interacts directly with uS11 and eS26, which form part of the mRNA exit tunnel.

Its subcellular location is the cytoplasm. In terms of biological role, component of the ribosome, a large ribonucleoprotein complex responsible for the synthesis of proteins in the cell. The small ribosomal subunit (SSU) binds messenger RNAs (mRNAs) and translates the encoded message by selecting cognate aminoacyl-transfer RNA (tRNA) molecules. The large subunit (LSU) contains the ribosomal catalytic site termed the peptidyl transferase center (PTC), which catalyzes the formation of peptide bonds, thereby polymerizing the amino acids delivered by tRNAs into a polypeptide chain. The nascent polypeptides leave the ribosome through a tunnel in the LSU and interact with protein factors that function in enzymatic processing, targeting, and the membrane insertion of nascent chains at the exit of the ribosomal tunnel. The sequence is that of Small ribosomal subunit protein eS1B (rps102) from Schizosaccharomyces pombe (strain 972 / ATCC 24843) (Fission yeast).